The chain runs to 618 residues: Paraneoplastic antigen-like protein 5 (618 aa).

A compositionally biased stretch (basic and acidic residues) spans 390–399 (AGEEGQRKES). 3 disordered regions span residues 390 to 409 (AGEE…EPDE), 451 to 475 (RDTL…EGQQ), and 519 to 549 (SMIT…ELRM).

The protein belongs to the PNMA family. In terms of tissue distribution, restricted to testis, where expression is low. Not detected in the brain.

It localises to the nucleus. The chain is Paraneoplastic antigen-like protein 5 (Pnma5) from Mus musculus (Mouse).